Here is a 421-residue protein sequence, read N- to C-terminus: Serine hydroxymethyltransferase (421 aa).

(6S)-5,6,7,8-tetrahydrofolate-binding positions include L121 and 125 to 127 (GHL). K230 is modified (N6-(pyridoxal phosphate)lysine). 355-357 (SPF) is a (6S)-5,6,7,8-tetrahydrofolate binding site.

This sequence belongs to the SHMT family. In terms of assembly, homodimer. Pyridoxal 5'-phosphate is required as a cofactor.

Its subcellular location is the cytoplasm. The catalysed reaction is (6R)-5,10-methylene-5,6,7,8-tetrahydrofolate + glycine + H2O = (6S)-5,6,7,8-tetrahydrofolate + L-serine. It functions in the pathway one-carbon metabolism; tetrahydrofolate interconversion. It participates in amino-acid biosynthesis; glycine biosynthesis; glycine from L-serine: step 1/1. Functionally, catalyzes the reversible interconversion of serine and glycine with tetrahydrofolate (THF) serving as the one-carbon carrier. This reaction serves as the major source of one-carbon groups required for the biosynthesis of purines, thymidylate, methionine, and other important biomolecules. Also exhibits THF-independent aldolase activity toward beta-hydroxyamino acids, producing glycine and aldehydes, via a retro-aldol mechanism. This chain is Serine hydroxymethyltransferase, found in Cellvibrio japonicus (strain Ueda107) (Pseudomonas fluorescens subsp. cellulosa).